We begin with the raw amino-acid sequence, 166 residues long: Phospholipase A2 inhibitor clone 08 (166 aa).

The N-terminal stretch at 1–19 is a signal peptide; it reads MRLILLSSLLLLGIFLANG. Residues 46 to 161 form the C-type lectin domain; the sequence is LKGAFLTVHR…CDDNLLVVCE (116 aa). 2 disulfide bridges follow: cysteine 83–cysteine 160 and cysteine 138–cysteine 152. An N-linked (GlcNAc...) asparagine glycan is attached at asparagine 122.

This sequence belongs to the alpha-type phospholipase A2 inhibitor family. In terms of assembly, homotrimer; non-covalently linked. Expressed by the liver.

Its subcellular location is the secreted. This phospholipase A2 inhibitor binds directly phospholipase A2 in the presence or absence of calcium. This Bothrops moojeni (Lance-headed viper) protein is Phospholipase A2 inhibitor clone 08.